The primary structure comprises 1372 residues: DNA-directed RNA polymerase subunit beta (1372 aa).

It belongs to the RNA polymerase beta chain family. As to quaternary structure, the RNAP catalytic core consists of 2 alpha, 1 beta, 1 beta' and 1 omega subunit. When a sigma factor is associated with the core the holoenzyme is formed, which can initiate transcription.

It catalyses the reaction RNA(n) + a ribonucleoside 5'-triphosphate = RNA(n+1) + diphosphate. Functionally, DNA-dependent RNA polymerase catalyzes the transcription of DNA into RNA using the four ribonucleoside triphosphates as substrates. The chain is DNA-directed RNA polymerase subunit beta from Rickettsia bellii (strain RML369-C).